The following is a 230-amino-acid chain: Type II restriction enzyme Eco47I (230 aa).

It carries out the reaction Endonucleolytic cleavage of DNA to give specific double-stranded fragments with terminal 5'-phosphates.. A P subtype restriction enzyme that recognizes the double-stranded sequence 5'-GGWCC-3' and cleaves after G-1. This chain is Type II restriction enzyme Eco47I, found in Escherichia coli.